Here is a 215-residue protein sequence, read N- to C-terminus: Redox-sensing transcriptional repressor Rex (215 aa).

The segment at residues 18 to 57 (LYYRFLKNLHASGKQRVSSAELSEAVKVDPATIRRDFSYF) is a DNA-binding region (H-T-H motif). Position 92-97 (92-97 (GVGNLG)) interacts with NAD(+).

The protein belongs to the transcriptional regulatory Rex family. In terms of assembly, homodimer.

It localises to the cytoplasm. Its function is as follows. Modulates transcription in response to changes in cellular NADH/NAD(+) redox state. The chain is Redox-sensing transcriptional repressor Rex from Geobacillus sp. (strain WCH70).